The primary structure comprises 436 residues: DNA-dependent metalloprotease SPRTN (436 aa).

The SprT-like domain maps to 19–186 (IRALFLEFND…RTCGGEFVKI (168 aa)). Histidine 85 contributes to the Zn(2+) binding site. The active site involves glutamate 86. Zn(2+) contacts are provided by histidine 89 and histidine 104. The interval 184–219 (VKIKEPENYSQKRKRNNDPTKSELGNSSHVKINKGK) is disordered. An SHP-box motif is present at residues 231–239 (FSGTGYKLF). Residues 271-277 (QTDSTFL) carry the PIP-box motif. The segment at 300-321 (GSPIKLPSSSNNKSHQDSSKQK) is disordered. The segment at 408 to 435 (KVCCPVCGTEIFESKINDHLDTCLQNYN) adopts a UBZ4-type zinc-finger fold. Zn(2+) contacts are provided by cysteine 411, cysteine 414, histidine 426, and cysteine 430.

Belongs to the Spartan family. In terms of assembly, homodimer. Zn(2+) is required as a cofactor. In terms of processing, autocatalytically cleaved in response to double-stranded DNA-binding: autocatalytic cleavage takes place in trans and leads to inactivation.

It is found in the nucleus. The protein localises to the chromosome. With respect to regulation, DNA-binding activates the protease activity: single-stranded DNA-binding specifically activates ability to cleave covalent DNA-protein cross-links (DPCs). In contrast, double-stranded DNA-binding specifically activates autocatalytic cleavage, and subsequent inactivation. In terms of biological role, DNA-dependent metalloendopeptidase that mediates the proteolytic cleavage of covalent DNA-protein cross-links (DPCs) during DNA synthesis, thereby playing a key role in maintaining genomic integrity. DPCs are highly toxic DNA lesions that interfere with essential chromatin transactions, such as replication and transcription, and which are induced by reactive agents, such as UV light or formaldehyde. Associates with the DNA replication machinery and specifically removes DPCs during DNA synthesis. Catalyzes proteolytic cleavage of the hmces DNA-protein cross-link following unfolding by the brip1/fancj helicase. Acts as a pleiotropic protease for DNA-binding proteins cross-linked with DNA, such as top1, top2a, histones H3 and H4. Mediates degradation of DPCs that are not ubiquitinated, while it is not able to degrade ubiquitinated DPCs. SPRTN activation requires polymerase collision with DPCs followed by helicase bypass of DPCs. May also act as a 'reader' of ubiquitinated pcna: facilitates chromatin association of rad18 and is required for efficient pcna monoubiquitination, promoting a feed-forward loop to enhance pcna ubiquitination and translesion DNA synthesis. Acts as a regulator of translesion DNA synthesis by recruiting vcp/p97 to sites of DNA damage. This chain is DNA-dependent metalloprotease SPRTN, found in Xenopus tropicalis (Western clawed frog).